The primary structure comprises 326 residues: Homeobox protein Hox-A1 (326 aa).

Positions 196-201 (TFDWMK) match the Antp-type hexapeptide motif. Residues 221-280 (PNTVRTNFTTKQLTELEKEFHFNKYLTRARRVEIAAALQLNETQVKIWFQNRRMKQKKRE) constitute a DNA-binding region (homeobox). The disordered stretch occupies residues 273 to 326 (RMKQKKREKEGLTSASPATPGSEANTEDTSDKCNSTSSTPSPSSSTSETINTSG). A compositionally biased stretch (polar residues) spans 285–296 (TSASPATPGSEA). Residues 306–326 (NSTSSTPSPSSSTSETINTSG) show a composition bias toward low complexity.

It belongs to the Antp homeobox family. Labial subfamily.

The protein resides in the nucleus. Its function is as follows. Sequence-specific transcription factor. Part of a developmental regulatory system that provides cells with specific positional identities on the anterior-posterior axis. Acts on the anterior body structures. Seems to act in the maintenance and/or generation of hindbrain segments. This chain is Homeobox protein Hox-A1 (HOXA1), found in Heterodontus francisci (Horn shark).